Reading from the N-terminus, the 558-residue chain is INCREASED PETAL GROWTH ANISOTROPY 1-like protein 2 (558 aa).

A compositionally biased stretch (low complexity) spans 1 to 15 (MSRISTTSTTPSRVR). Positions 1 to 54 (MSRISTTSTTPSRVRAANSHYSVISKPRAQDDNGLTGGKPKSSGYDVKNDPAKR) are disordered. The stretch at 104–180 (VMATAAAEDE…EAKISSLSSN (77 aa)) forms a coiled coil. The interval 207-285 (KVKKEVAVES…AARAQKSPPV (79 aa)) is disordered. Composition is skewed to pro residues over residues 221-236 (PPSP…PPLP) and 256-272 (FAPP…PPRP). The stretch at 392-448 (KADTLQEAAVEYRELKKLEKELSSYSDDPNIHYGVALKKMANLLDKSEQRIRRLVRL) forms a coiled coil.

It belongs to the IPGA1 family.

It localises to the cytoplasm. The protein localises to the cytoskeleton. In terms of biological role, microtubule-associated protein probably involved in the regulation of microtubule organization. The chain is INCREASED PETAL GROWTH ANISOTROPY 1-like protein 2 from Arabidopsis thaliana (Mouse-ear cress).